The primary structure comprises 183 residues: ATP synthase subunit delta (183 aa).

It belongs to the ATPase delta chain family. In terms of assembly, F-type ATPases have 2 components, F(1) - the catalytic core - and F(0) - the membrane proton channel. F(1) has five subunits: alpha(3), beta(3), gamma(1), delta(1), epsilon(1). CF(0) has four main subunits: a(1), b(1), b'(1) and c(10-14). The alpha and beta chains form an alternating ring which encloses part of the gamma chain. F(1) is attached to F(0) by a central stalk formed by the gamma and epsilon chains, while a peripheral stalk is formed by the delta, b and b' chains.

Its subcellular location is the cellular thylakoid membrane. F(1)F(0) ATP synthase produces ATP from ADP in the presence of a proton or sodium gradient. F-type ATPases consist of two structural domains, F(1) containing the extramembraneous catalytic core and F(0) containing the membrane proton channel, linked together by a central stalk and a peripheral stalk. During catalysis, ATP synthesis in the catalytic domain of F(1) is coupled via a rotary mechanism of the central stalk subunits to proton translocation. Functionally, this protein is part of the stalk that links CF(0) to CF(1). It either transmits conformational changes from CF(0) to CF(1) or is implicated in proton conduction. This chain is ATP synthase subunit delta, found in Trichormus variabilis (strain ATCC 29413 / PCC 7937) (Anabaena variabilis).